Here is a 190-residue protein sequence, read N- to C-terminus: Protein GrpE (190 aa).

The span at 1-18 shows a compositional bias: polar residues; it reads MTETPNTSSEEIQTSEPS. Positions 1-21 are disordered; it reads MTETPNTSSEEIQTSEPSPDN.

It belongs to the GrpE family. In terms of assembly, homodimer.

Its subcellular location is the cytoplasm. In terms of biological role, participates actively in the response to hyperosmotic and heat shock by preventing the aggregation of stress-denatured proteins, in association with DnaK and GrpE. It is the nucleotide exchange factor for DnaK and may function as a thermosensor. Unfolded proteins bind initially to DnaJ; upon interaction with the DnaJ-bound protein, DnaK hydrolyzes its bound ATP, resulting in the formation of a stable complex. GrpE releases ADP from DnaK; ATP binding to DnaK triggers the release of the substrate protein, thus completing the reaction cycle. Several rounds of ATP-dependent interactions between DnaJ, DnaK and GrpE are required for fully efficient folding. This is Protein GrpE from Chlamydia trachomatis serovar L2 (strain ATCC VR-902B / DSM 19102 / 434/Bu).